A 31-amino-acid chain; its full sequence is MSDIN-like toxin proprotein 8 (31 aa).

The propeptide occupies 1–10; it reads MSDINTARLP. Residues 11–18 constitute a cross-link (cyclopeptide (Cys-Pro)); it reads CIGFLGIP. The propeptide occupies 19–31; that stretch reads SVGDDIEMVLRHG.

The protein belongs to the MSDIN fungal toxin family. Processed by the macrocyclase-peptidase enzyme POPB to yield a toxic cyclic octapeptide. POPB first removes 10 residues from the N-terminus. Conformational trapping of the remaining peptide forces the enzyme to release this intermediate rather than proceed to macrocyclization. The enzyme rebinds the remaining peptide in a different conformation and catalyzes macrocyclization of the N-terminal 8 residues.

Probable toxin that belongs to the MSDIN-like toxin family responsible for a large number of food poisoning cases and deaths. The polypeptide is MSDIN-like toxin proprotein 8 (Amanita bisporigera (Destroying angel)).